Here is a 920-residue protein sequence, read N- to C-terminus: Histone-lysine N-methyltransferase, H3 lysine-4 specific (920 aa).

Positions 94–179 (TQVFVSNISP…KPLSVVLDRD (86 aa)) constitute an RRM domain. Over residues 205-216 (KQRFEREDESSR) the composition is skewed to basic and acidic residues. Disordered regions lie at residues 205–242 (KQRFEREDESSRQKLSAAMNEDIPPWRQPSKNSQTLSN) and 448–485 (KRVDSSKMNLSAGSKTKSKLQRRRRRRHEARPLHYQLN). Composition is skewed to polar residues over residues 233–242 (PSKNSQTLSN) and 453–462 (SKMNLSAGSK). The span at 463-476 (TKSKLQRRRRRRHE) shows a compositional bias: basic residues. The short motif at 749–754 (RVNNRR) is the RxxxRR motif element. Positions 781-898 (KQLHFGPSRI…HGEELTYDYK (118 aa)) constitute an SET domain. Tyrosine 897 is an S-adenosyl-L-methionine binding site. One can recognise a Post-SET domain in the interval 904 to 920 (DKIPCLCGAPTCRGYLN).

This sequence belongs to the class V-like SAM-binding methyltransferase superfamily. Component of the Set1C/COMPASS complex composed of ash2, sdc1, set1, shg1, spp1, swd1, swd2 and swd3.

It is found in the nucleus. The protein resides in the chromosome. The catalysed reaction is L-lysyl(4)-[histone H3] + 3 S-adenosyl-L-methionine = N(6),N(6),N(6)-trimethyl-L-lysyl(4)-[histone H3] + 3 S-adenosyl-L-homocysteine + 3 H(+). It carries out the reaction N(6)-methyl-L-lysyl(4)-[histone H3] + S-adenosyl-L-methionine = N(6),N(6)-dimethyl-L-lysyl(4)-[histone H3] + S-adenosyl-L-homocysteine + H(+). It catalyses the reaction N(6),N(6)-dimethyl-L-lysyl(4)-[histone H3] + S-adenosyl-L-methionine = N(6),N(6),N(6)-trimethyl-L-lysyl(4)-[histone H3] + S-adenosyl-L-homocysteine + H(+). Its function is as follows. Catalytic component of the COMPASS (Set1C) complex that specifically mono-, di- and trimethylates histone H3 to form H3K4me1/2/3. Binds RNA which might negatively affect its histone methyltransferase activity. COMPASS recognizes ubiquitinated H2B on one face of the nucleosome which stimulates the methylation of H3 on the opposing face. Methylation promotes maintenance of active chromatin states at euchromatic chromosomal domains and is present throughout the cell cycle. Plays a role in telomere maintenance and DNA repair in an ATM kinase rad3-dependent pathway. Required for efficient telomeric and centromeric silencing. The protein is Histone-lysine N-methyltransferase, H3 lysine-4 specific of Schizosaccharomyces pombe (strain 972 / ATCC 24843) (Fission yeast).